The following is a 291-amino-acid chain: Meiosis-specific protein SPO13 (291 aa).

3 disordered regions span residues 1-30 (MAPR…QEKT), 116-143 (SFDN…QSSQ), and 271-291 (CSDY…SSLN). The Nuclear localization signal signature appears at 3–6 (PRKR). Residues 116-125 (SFDNSLRFED) show a composition bias toward basic and acidic residues. Polar residues predominate over residues 130 to 143 (PKSTSTPVLSQSSQ).

It localises to the nucleus. In terms of biological role, required for meiosis I segmentation. Probably acts as a regulator of kinetochore function during meiosis I: required both for mono-orientation of kinetochores on sister chromosomes and protection of centromeric cohesin from separase-mediated cleavage. In Saccharomyces cerevisiae (strain ATCC 204508 / S288c) (Baker's yeast), this protein is Meiosis-specific protein SPO13 (SPO13).